The sequence spans 1231 residues: Fanconi anemia group J protein homolog (1231 aa).

The Helicase ATP-binding domain maps to 11-448 (GGVKILFPCR…SDHEPLRAVC (438 aa)). ATP is bound at residue 46 to 53 (SPTGSGKS). Disordered stretches follow at residues 104–126 (TFSS…GASS) and 147–166 (QDDD…DEQL). The segment covering 152–166 (QTDRKRIRQSHDEQL) has biased composition (basic and acidic residues). The Nuclear localization signal motif lies at 155 to 173 (RKRIRQSHDEQLQARKRRC). The [4Fe-4S] cluster site is built by cysteine 291, cysteine 304, cysteine 316, and cysteine 356. A DEAH box motif is present at residues 399 to 402 (DEAH). Over residues 890 to 903 (SKNQQQRMQMSSTN) the composition is skewed to polar residues. 3 disordered regions span residues 890–924 (SKNQ…PTSS), 936–956 (VSEF…PPEI), and 1195–1231 (GNEN…FFLD). Composition is skewed to low complexity over residues 909–924 (SQGT…PTSS) and 940–954 (TQPT…TSPP). Positions 1206–1217 (KGTEQKNRENRL) are enriched in basic and acidic residues.

It belongs to the DEAD box helicase family. DEAH subfamily. [4Fe-4S] cluster serves as cofactor.

It is found in the nucleus. The enzyme catalyses Couples ATP hydrolysis with the unwinding of duplex DNA at the replication fork by translocating in the 5'-3' direction. This creates two antiparallel DNA single strands (ssDNA). The leading ssDNA polymer is the template for DNA polymerase III holoenzyme which synthesizes a continuous strand.. It carries out the reaction ATP + H2O = ADP + phosphate + H(+). DNA-dependent helicase and 5' to 3' DNA helicase required for the maintenance of chromosomal stability. Involved in the repair of DNA double-strand breaks by homologous recombination. Involved in the repair of abasic sites at replication forks by promoting the degradation of DNA-protein cross-links: acts by catalyzing unfolding of HMCES DNA-protein cross-link via its helicase activity, exposing the underlying DNA and enabling cleavage of the DNA-protein adduct by the SPRTN metalloprotease. This is Fanconi anemia group J protein homolog (brip1.L) from Xenopus laevis (African clawed frog).